Consider the following 341-residue polypeptide: MAP3K12-binding inhibitory protein 1 (341 aa).

S91 carries the post-translational modification Phosphoserine. Residues K94, K127, K137, K151, and K233 each participate in a glycyl lysine isopeptide (Lys-Gly) (interchain with G-Cter in SUMO2) cross-link. The tract at residues 170–341 is interaction with MAP3K12; it reads AEINENNVRE…EADSMAAHLP (172 aa). Residues 269 to 283 form a leucine-zipper 1 region; the sequence is IYQRIKKLEDKILEL. K299 bears the N6-acetyllysine; alternate mark. Residue K299 forms a Glycyl lysine isopeptide (Lys-Gly) (interchain with G-Cter in SUMO2); alternate linkage. Residues K302 and K323 each participate in a glycyl lysine isopeptide (Lys-Gly) (interchain with G-Cter in SUMO2) cross-link. Residues 312-327 form a leucine-zipper 2 region; sequence LAELDEKISALKRALL.

Component of the ADA2A-containing complex (ATAC), composed of KAT14, KAT2A, TADA2L, TADA3L, ZZ3, MBIP, WDR5, YEATS2, CCDC101 and DR1. In the complex, it probably interacts directly with KAT2A, KAT14 and WDR5.

It is found in the nucleus. It localises to the cytoplasm. In terms of biological role, inhibits the MAP3K12 activity to induce the activation of the JNK/SAPK pathway. Component of the ATAC complex, a complex with histone acetyltransferase activity on histones H3 and H4. This is MAP3K12-binding inhibitory protein 1 (Mbip) from Mus musculus (Mouse).